Consider the following 492-residue polypeptide: 2-succinylbenzoate--CoA ligase (492 aa).

The protein belongs to the ATP-dependent AMP-binding enzyme family. MenE subfamily.

It catalyses the reaction 2-succinylbenzoate + ATP + CoA = 2-succinylbenzoyl-CoA + AMP + diphosphate. Its pathway is quinol/quinone metabolism; 1,4-dihydroxy-2-naphthoate biosynthesis; 1,4-dihydroxy-2-naphthoate from chorismate: step 5/7. It functions in the pathway quinol/quinone metabolism; menaquinone biosynthesis. Functionally, converts 2-succinylbenzoate (OSB) to 2-succinylbenzoyl-CoA (OSB-CoA). This chain is 2-succinylbenzoate--CoA ligase, found in Staphylococcus aureus (strain Mu3 / ATCC 700698).